A 436-amino-acid chain; its full sequence is Prenyltransferase nscD (436 aa).

Belongs to the tryptophan dimethylallyltransferase family.

It participates in secondary metabolite biosynthesis. Its function is as follows. Prenyltransferase; part of the gene cluster that mediates the biosynthesis of neosartoricin B, a prenylated anthracenone that probably exhibits T-cell antiproliferative activity, suggestive of a physiological role as an immunosuppressive agent. The non-reducing polyketide synthase nscA probably synthesizes and cyclizes the decaketide backbone. The hydrolase nscB then mediates the product release through hydrolysis followed by spontaneous decarboxylation. The prenyltransferase nscD catalyzes the addition of the dimethylallyl group to the aromatic C5. The FAD-dependent monooxygenase nscC is then responsible for the stereospecific hydroxylation at C2. Neosartoricin B can be converted into two additional compounds neosartoricins C and D. Neosartoricin C is a spirocyclic compound that is cyclized through the attack of C3 hydroxyl on C14, followed by dehydration. On the other hand, neosartoricin D is a further cyclized compound in which attack of C2 on C14 in neosartoricin C results in the formation of the acetal-containing dioxabicyclo-octanone ring. Both of these compounds are novel and possibly represent related metabolites of the gene cluster. This is Prenyltransferase nscD from Arthroderma benhamiae (strain ATCC MYA-4681 / CBS 112371) (Trichophyton mentagrophytes).